The chain runs to 172 residues: Large ribosomal subunit protein uL10 (172 aa).

It belongs to the universal ribosomal protein uL10 family. Part of the ribosomal stalk of the 50S ribosomal subunit. The N-terminus interacts with L11 and the large rRNA to form the base of the stalk. The C-terminus forms an elongated spine to which L12 dimers bind in a sequential fashion forming a multimeric L10(L12)X complex.

Functionally, forms part of the ribosomal stalk, playing a central role in the interaction of the ribosome with GTP-bound translation factors. This is Large ribosomal subunit protein uL10 (rplJ) from Chlamydia trachomatis serovar D (strain ATCC VR-885 / DSM 19411 / UW-3/Cx).